The sequence spans 46 residues: MVIIKYTTKTQPTPVKEMFISPQHYAKWRSHMGSKLTSVKPIKGGR.

This is Putative gene 54 protein (54) from Bacillus phage SP01 (Bacteriophage SP01).